A 397-amino-acid chain; its full sequence is Homocitrate synthase AksA (397 aa).

The 252-residue stretch at valine 19–alanine 270 folds into the Pyruvate carboxyltransferase domain.

It belongs to the alpha-IPM synthase/homocitrate synthase family.

It catalyses the reaction acetyl-CoA + 2-oxoglutarate + H2O = (2R)-homocitrate + CoA + H(+). The enzyme catalyses 2-oxoadipate + acetyl-CoA + H2O = (R)-dihomocitrate + CoA + H(+). The catalysed reaction is 2-oxoheptanedioate + acetyl-CoA + H2O = (R)-trihomocitrate + CoA + H(+). Its pathway is organic acid metabolism; 2-oxosuberate biosynthesis. Catalyzes the condensation of alpha-ketoglutarate and acetyl-CoA to form (R)-homocitrate. Can also catalyze the condensation of alpha-ketoadipate with acetyl-CoA to form (R)-homo(2)citrate, and the condensation of alpha-ketopimelate with acetyl-CoA to form (R)-homo(3)citrate. These reactions are part of the biosynthesis pathway of coenzyme B and biotin. In Methanopyrus kandleri (strain AV19 / DSM 6324 / JCM 9639 / NBRC 100938), this protein is Homocitrate synthase AksA (aksA).